A 605-amino-acid polypeptide reads, in one-letter code: Endonuclease 8-like 3 (605 aa).

The active-site Schiff-base intermediate with DNA; via amino nitrogen is the valine 2. DNA is bound by residues asparagine 192 and arginine 271. The segment at 247 to 281 (KVYKRPNCGQCHCRITVCRFGDNNRMTYFCPHCQK) adopts an FPG-type zinc-finger fold. The segment at 317–346 (SEEHWTCVVCTLINKPSSKACDACLTSRPI) adopts a RanBP2-type zinc-finger fold. A Phosphoserine modification is found at serine 450. Residues 456-477 (ESKLFSPAHKKPKTAQYSSPEL) form a disordered region. Zn(2+) is bound by residues cysteine 507, histidine 510, cysteine 533, cysteine 541, cysteine 554, histidine 556, cysteine 579, and cysteine 587. 2 consecutive GRF-type zinc fingers follow at residues 507–550 (CSKH…ADLS) and 554–596 (CNHG…AENG).

The protein belongs to the FPG family. In terms of tissue distribution, expressed in keratinocytes and embryonic fibroblasts (at protein level). Also detected in thymus, testis and fetal lung primary fibroblasts.

The protein resides in the nucleus. It is found in the chromosome. The enzyme catalyses 2'-deoxyribonucleotide-(2'-deoxyribose 5'-phosphate)-2'-deoxyribonucleotide-DNA = a 3'-end 2'-deoxyribonucleotide-(2,3-dehydro-2,3-deoxyribose 5'-phosphate)-DNA + a 5'-end 5'-phospho-2'-deoxyribonucleoside-DNA + H(+). Functionally, DNA glycosylase which prefers single-stranded DNA (ssDNA), or partially ssDNA structures such as bubble and fork structures, to double-stranded DNA (dsDNA). Mediates interstrand cross-link repair in response to replication stress: acts by mediating DNA glycosylase activity, cleaving one of the two N-glycosyl bonds comprising the interstrand cross-link, which avoids the formation of a double-strand break but generates an abasic site that is bypassed by translesion synthesis polymerases. In vitro, displays strong glycosylase activity towards the hydantoin lesions spiroiminodihydantoin (Sp) and guanidinohydantoin (Gh) in both ssDNA and dsDNA; also recognizes FapyA, FapyG, 5-OHU, 5-OHC, 5-OHMH, Tg and 8-oxoA lesions in ssDNA. No activity on 8-oxoG detected. Also shows weak DNA-(apurinic or apyrimidinic site) lyase activity. In vivo, appears to be the primary enzyme involved in removing Sp and Gh from ssDNA in neonatal tissues. This Homo sapiens (Human) protein is Endonuclease 8-like 3 (NEIL3).